The sequence spans 874 residues: Alanine--tRNA ligase (874 aa).

The Zn(2+) site is built by His-563, His-567, Cys-664, and His-668.

This sequence belongs to the class-II aminoacyl-tRNA synthetase family. Requires Zn(2+) as cofactor.

It localises to the cytoplasm. The enzyme catalyses tRNA(Ala) + L-alanine + ATP = L-alanyl-tRNA(Ala) + AMP + diphosphate. Catalyzes the attachment of alanine to tRNA(Ala) in a two-step reaction: alanine is first activated by ATP to form Ala-AMP and then transferred to the acceptor end of tRNA(Ala). Also edits incorrectly charged Ser-tRNA(Ala) and Gly-tRNA(Ala) via its editing domain. The polypeptide is Alanine--tRNA ligase (Methylobacillus flagellatus (strain ATCC 51484 / DSM 6875 / VKM B-1610 / KT)).